We begin with the raw amino-acid sequence, 249 residues long: Probable proteasome subunit alpha type-2 (249 aa).

Belongs to the peptidase T1A family. The 26S proteasome consists of a 20S proteasome core and two 19S regulatory subunits. The 20S proteasome core is composed of 28 subunits that are arranged in four stacked rings, resulting in a barrel-shaped structure. The two end rings are each formed by seven alpha subunits, and the two central rings are each formed by seven beta subunits. The catalytic chamber with the active sites is on the inside of the barrel.

Its subcellular location is the cytoplasm. The protein resides in the nucleus. In terms of biological role, the proteasome is a multicatalytic proteinase complex which is characterized by its ability to cleave peptides with Arg, Phe, Tyr, Leu, and Glu adjacent to the leaving group at neutral or slightly basic pH. The proteasome has an ATP-dependent proteolytic activity. This Neurospora crassa (strain ATCC 24698 / 74-OR23-1A / CBS 708.71 / DSM 1257 / FGSC 987) protein is Probable proteasome subunit alpha type-2 (pca-2).